Here is a 625-residue protein sequence, read N- to C-terminus: Endoglucanase 13 (625 aa).

The N-terminal stretch at 1 to 34 (MAATMNKTPATTFLLIPAAASLVLLLAAAASVEA) is a signal peptide. Residue Asp-91 is the Nucleophile of the active site. Residue His-427 is part of the active site. N-linked (GlcNAc...) asparagine glycosylation is present at Asn-440. Residues Asp-479 and Glu-488 contribute to the active site. Positions 509–530 (ADNTPEYTPAPNAPSPSNGGSP) are disordered.

It belongs to the glycosyl hydrolase 9 (cellulase E) family.

It is found in the secreted. The enzyme catalyses Endohydrolysis of (1-&gt;4)-beta-D-glucosidic linkages in cellulose, lichenin and cereal beta-D-glucans.. In Oryza sativa subsp. indica (Rice), this protein is Endoglucanase 13 (GLU6).